Here is a 795-residue protein sequence, read N- to C-terminus: Inactive N-acetylated-alpha-linked acidic dipeptidase-like protein 2 (795 aa).

A disordered region spans residues 1–38 (MGENEASLPNTSLQGKKMAYQKVHADQRAPGHSQYLDN). Residues 1–121 (MGENEASLPN…RSAPKSNRCN (121 aa)) are Cytoplasmic-facing. Position 92 is a phosphoserine (serine 92). The helical; Signal-anchor for type II membrane protein transmembrane segment at 122–142 (FCHVLKILCTATILFIFGILI) threads the bilayer. At 143 to 795 (GYYVHTNCPS…VFKSVLDGKN (653 aa)) the chain is on the extracellular side. N-linked (GlcNAc...) asparagine glycosylation is found at asparagine 295, asparagine 373, asparagine 534, and asparagine 759.

Belongs to the peptidase M28 family. M28B subfamily. Expressed at higher level in kidney and placenta. In embryo, it is mainly confined to duodenal and stomach endoderm, mesonephros, metanephros and pancreas.

It localises to the membrane. In terms of biological role, may be catalytically inactive. The protein is Inactive N-acetylated-alpha-linked acidic dipeptidase-like protein 2 (NAALADL2) of Homo sapiens (Human).